Reading from the N-terminus, the 130-residue chain is Large ribosomal subunit protein bL12 (130 aa).

It belongs to the bacterial ribosomal protein bL12 family. Homodimer. Part of the ribosomal stalk of the 50S ribosomal subunit. Forms a multimeric L10(L12)X complex, where L10 forms an elongated spine to which 2 to 4 L12 dimers bind in a sequential fashion. Binds GTP-bound translation factors.

Forms part of the ribosomal stalk which helps the ribosome interact with GTP-bound translation factors. Is thus essential for accurate translation. The protein is Large ribosomal subunit protein bL12 of Parafrankia sp. (strain EAN1pec).